The sequence spans 102 residues: Monothiol glutaredoxin-S6 (102 aa).

One can recognise a Glutaredoxin domain in the interval 1 to 101; the sequence is MESVRSLVED…AMLRRAGAIW (101 aa). Residue Cys21 coordinates [2Fe-2S] cluster.

Belongs to the glutaredoxin family. CC-type subfamily.

Its subcellular location is the cytoplasm. Its function is as follows. May only reduce GSH-thiol disulfides, but not protein disulfides. In Arabidopsis thaliana (Mouse-ear cress), this protein is Monothiol glutaredoxin-S6 (GRXS6).